A 229-amino-acid chain; its full sequence is C-&gt;U-editing enzyme APOBEC-1 (229 aa).

In terms of domain architecture, CMP/dCMP-type deaminase spans 10-134; sequence VDPTLRRRIE…QRNRQGLRDL (125 aa). Histidine 61 provides a ligand contact to Zn(2+). Glutamate 63 functions as the Proton donor in the catalytic mechanism. Zn(2+)-binding residues include cysteine 93 and cysteine 96.

It belongs to the cytidine and deoxycytidylate deaminase family. In terms of assembly, homodimer. Interacts with A1CF; form an mRNA editing complex. Interacts with RBM47; form an mRNA editing complex. Found in a complex with CELF2/CUGBP2 and A1CF. Interacts with HNRPAB. Interacts with SYNCRIP. It depends on Zn(2+) as a cofactor.

It is found in the cytoplasm. The protein resides in the nucleus. The enzyme catalyses a cytidine in mRNA + H2O + H(+) = a uridine in mRNA + NH4(+). It carries out the reaction cytidine(6666) in apoB mRNA + H2O + H(+) = uridine(6666) in apoB mRNA + NH4(+). Cytidine deaminase catalyzing the cytidine to uridine postranscriptional editing of a variety of mRNAs. Form complexes with cofactors that confer differential editing activity and selectivity. Responsible for the postranscriptional editing of a CAA codon for Gln to a UAA codon for stop in the apolipoprotein B mRNA. Also involved in CGA (Arg) to UGA (Stop) editing in the NF1 mRNA. May also play a role in the epigenetic regulation of gene expression by participating in DNA demethylation. The chain is C-&gt;U-editing enzyme APOBEC-1 from Mesocricetus auratus (Golden hamster).